The following is a 115-amino-acid chain: MAAIPASGSLVATHDYYRRRIGSTSSSSSCGSSEYSGEVIPHHPGLPKQDSGHWWSSFFFGKQNLPGMGTVAEEAQQKSGVVSVTNGQVTCVAREMVMRQASESSDGGKSEAGNS.

The disordered stretch occupies residues 21-48; sequence IGSTSSSSSCGSSEYSGEVIPHHPGLPK. The span at 22 to 37 shows a compositional bias: low complexity; it reads GSTSSSSSCGSSEYSG.

Belongs to the PPDPF family.

Functionally, probable regulator of exocrine pancreas development. The chain is Pancreatic progenitor cell differentiation and proliferation factor B (ppdpfb) from Danio rerio (Zebrafish).